We begin with the raw amino-acid sequence, 246 residues long: Probable H/ACA ribonucleoprotein complex subunit 1-like protein (246 aa).

Disordered stretches follow at residues 1 to 61 (MSFR…GGYD) and 155 to 246 (PQVG…TKFD). RGG-box regions lie at residues 4–59 (RGGR…GRGG) and 161–223 (RGRG…RGRG). Over residues 168–180 (RGGDRGRGGDRGR) the composition is skewed to basic and acidic residues. A compositionally biased stretch (gly residues) spans 181–221 (GGFGGRGGGGGGFRGGSRGGFGGGDRGGFRGGRGGDFGGRG).

This sequence belongs to the GAR1 family. In terms of assembly, component of the small nucleolar ribonucleoprotein particle containing H/ACA-type snoRNAs (H/ACA snoRNPs).

The protein resides in the nucleus. The protein localises to the nucleolus. In terms of biological role, required for ribosome biogenesis. Part of a complex which catalyzes pseudouridylation of rRNA. This involves the isomerization of uridine such that the ribose is subsequently attached to C5, instead of the normal N1. Pseudouridine ('psi') residues may serve to stabilize the conformation of rRNAs. The protein is Probable H/ACA ribonucleoprotein complex subunit 1-like protein of Caenorhabditis briggsae.